A 364-amino-acid chain; its full sequence is Aminomethyltransferase (364 aa).

This sequence belongs to the GcvT family. The glycine cleavage system is composed of four proteins: P, T, L and H.

It carries out the reaction N(6)-[(R)-S(8)-aminomethyldihydrolipoyl]-L-lysyl-[protein] + (6S)-5,6,7,8-tetrahydrofolate = N(6)-[(R)-dihydrolipoyl]-L-lysyl-[protein] + (6R)-5,10-methylene-5,6,7,8-tetrahydrofolate + NH4(+). In terms of biological role, the glycine cleavage system catalyzes the degradation of glycine. This chain is Aminomethyltransferase, found in Escherichia coli O17:K52:H18 (strain UMN026 / ExPEC).